The following is a 356-amino-acid chain: tRNA N6-adenosine threonylcarbamoyltransferase (356 aa).

H115 and H119 together coordinate Fe cation. Substrate-binding positions include 138–142 (LVSGG), D171, G184, and N283. D311 provides a ligand contact to Fe cation.

It belongs to the KAE1 / TsaD family. Requires Fe(2+) as cofactor.

The protein resides in the cytoplasm. The enzyme catalyses L-threonylcarbamoyladenylate + adenosine(37) in tRNA = N(6)-L-threonylcarbamoyladenosine(37) in tRNA + AMP + H(+). In terms of biological role, required for the formation of a threonylcarbamoyl group on adenosine at position 37 (t(6)A37) in tRNAs that read codons beginning with adenine. Is involved in the transfer of the threonylcarbamoyl moiety of threonylcarbamoyl-AMP (TC-AMP) to the N6 group of A37, together with TsaE and TsaB. TsaD likely plays a direct catalytic role in this reaction. The protein is tRNA N6-adenosine threonylcarbamoyltransferase of Prochlorococcus marinus subsp. pastoris (strain CCMP1986 / NIES-2087 / MED4).